The following is a 179-amino-acid chain: Stathmin-2 (179 aa).

A membrane attachment region spans residues 1 to 26 (MAKTAMAYKEKMKELSMLSLICSCFY). Serine 16 is modified (phosphoserine). Residues cysteine 22 and cysteine 24 are each lipidated (S-palmitoyl cysteine). The 142-residue stretch at 38–179 (DDMEVKQINK…NKELQVELSG (142 aa)) folds into the SLD domain. The interval 39-96 (DMEVKQINKRASGQAFELILKPPSPISEAPRTLASPKKKDLSLEEIQKKLEAAEGRRK) is regulatory/phosphorylation domain. Serine 50 bears the Phosphoserine mark. A phosphoserine; by MAPK8 mark is found at serine 62 and serine 73. Residues 75–179 (KKKDLSLEEI…NKELQVELSG (105 aa)) are a coiled coil. Phosphoserine occurs at positions 80 and 97.

This sequence belongs to the stathmin family. As to quaternary structure, interacts with ITM2C. Interacts with MAPK8. Interacts with KIFBP. Interacts (via the N-terminal region) with CIB1 (via C-terminal region); the interaction is direct, occurs in a calcium-dependent manner and attenuates the neurite outgrowth inhibition of STMN2. Post-translationally, sumoylated. In terms of processing, phosphorylated by MAPK9 and MAPK10 in the developing brain cortex. Phosphorylated mostly by MAPK8. N-terminal palmitoylation promotes specific anchoring to the cytosolic leaflet of Golgi membranes and subsequent vesicular trafficking along dendrites and axons. Neuronal Stathmins are substrates for palmitoyltransferases ZDHHC3, ZDHHC7 and ZDHHC15. As to expression, expressed in neurons (at protein level). Present in growth cones and abundant in developing neurons.

Its subcellular location is the cytoplasm. It localises to the perinuclear region. The protein localises to the cell projection. The protein resides in the growth cone. It is found in the axon. Its subcellular location is the membrane. It localises to the golgi apparatus. The protein localises to the endosome. The protein resides in the lamellipodium. In terms of biological role, regulator of microtubule stability. When phosphorylated by MAPK8, stabilizes microtubules and consequently controls neurite length in cortical neurons. In the developing brain, negatively regulates the rate of exit from multipolar stage and retards radial migration from the ventricular zone. This chain is Stathmin-2 (Stmn2), found in Rattus norvegicus (Rat).